We begin with the raw amino-acid sequence, 105 residues long: Large ribosomal subunit protein P2 (105 aa).

The interval 84–105 is disordered; the sequence is AEAKKEEPEEEADDDMGFGLFD.

This sequence belongs to the eukaryotic ribosomal protein P1/P2 family. P1 and P2 exist as dimers at the large ribosomal subunit. Post-translationally, phosphorylated.

Functionally, plays an important role in the elongation step of protein synthesis. The sequence is that of Large ribosomal subunit protein P2 (ARP-1) from Leishmania donovani.